The chain runs to 195 residues: MELEVFAGQEKSELSMIEVARAILELRGRDHEMHFSDLVNEIQNYLGTSNSDIREALPLFYTELNFDGSFISLGDNKWGLRSWYGVDEIDEEIIALEENDDDEVAPKAKKKRVNAFMDGDSDAIDYNADDPEDEDAYEADPALSYDDENPDDEKNEVEAYDAEINEIAPDDLGEDVDLNEDDDEFSDDDAETSEE.

One can recognise an HTH HARE-type domain in the interval 14–83 (LSMIEVARAI…GDNKWGLRSW (70 aa)). Composition is skewed to acidic residues over residues 120–138 (DSDA…DAYE) and 145–195 (YDDE…TSEE). Residues 120-195 (DSDAIDYNAD…SDDDAETSEE (76 aa)) form a disordered region.

This sequence belongs to the RpoE family. RNAP is composed of a core of 2 alpha, a beta and a beta' subunits. The core is associated with a delta subunit and one of several sigma factors.

In terms of biological role, participates in both the initiation and recycling phases of transcription. In the presence of the delta subunit, RNAP displays an increased specificity of transcription, a decreased affinity for nucleic acids, and an increased efficiency of RNA synthesis because of enhanced recycling. The polypeptide is Probable DNA-directed RNA polymerase subunit delta (Streptococcus pneumoniae serotype 2 (strain D39 / NCTC 7466)).